The chain runs to 70 residues: Putative membrane protein insertion efficiency factor (70 aa).

This sequence belongs to the UPF0161 family.

The protein localises to the cell membrane. Its function is as follows. Could be involved in insertion of integral membrane proteins into the membrane. The polypeptide is Putative membrane protein insertion efficiency factor (Lachnoclostridium phytofermentans (strain ATCC 700394 / DSM 18823 / ISDg) (Clostridium phytofermentans)).